We begin with the raw amino-acid sequence, 145 residues long: Transcription antitermination protein NusB (145 aa).

This sequence belongs to the NusB family.

Its function is as follows. Involved in transcription antitermination. Required for transcription of ribosomal RNA (rRNA) genes. Binds specifically to the boxA antiterminator sequence of the ribosomal RNA (rrn) operons. The sequence is that of Transcription antitermination protein NusB from Burkholderia lata (strain ATCC 17760 / DSM 23089 / LMG 22485 / NCIMB 9086 / R18194 / 383).